We begin with the raw amino-acid sequence, 248 residues long: Segregation and condensation protein A (248 aa).

The protein belongs to the ScpA family. Component of a cohesin-like complex composed of ScpA, ScpB and the Smc homodimer, in which ScpA and ScpB bind to the head domain of Smc. The presence of the three proteins is required for the association of the complex with DNA.

The protein resides in the cytoplasm. Functionally, participates in chromosomal partition during cell division. May act via the formation of a condensin-like complex containing Smc and ScpB that pull DNA away from mid-cell into both cell halves. This chain is Segregation and condensation protein A, found in Clostridium perfringens (strain SM101 / Type A).